The sequence spans 229 residues: Putative germin-like protein 12-3 (229 aa).

A signal peptide spans 1–22; the sequence is MASSNFFLLIPLIALVTTQAMA. Cysteine 32 and cysteine 47 are oxidised to a cystine. The Cupin type-1 domain occupies 62–217; sequence ANLDKPMDIT…AFQVDKKAVD (156 aa). An N-linked (GlcNAc...) asparagine glycan is attached at asparagine 78. The Mn(2+) site is built by histidine 111, histidine 113, glutamate 118, and histidine 162.

This sequence belongs to the germin family. Oligomer (believed to be a pentamer but probably hexamer).

It localises to the secreted. It is found in the extracellular space. The protein localises to the apoplast. May play a role in plant defense. Probably has no oxalate oxidase activity even if the active site is conserved. This is Putative germin-like protein 12-3 from Oryza sativa subsp. japonica (Rice).